A 234-amino-acid chain; its full sequence is Ubiquitin carboxyl-terminal hydrolase 3 (234 aa).

The UCH catalytic domain maps to 12–232 (RWLPLESNPD…LNFNLIAISK (221 aa)). The active-site Nucleophile is cysteine 101. The active-site Proton donor is histidine 172.

It belongs to the peptidase C12 family.

The enzyme catalyses Thiol-dependent hydrolysis of ester, thioester, amide, peptide and isopeptide bonds formed by the C-terminal Gly of ubiquitin (a 76-residue protein attached to proteins as an intracellular targeting signal).. In Arabidopsis thaliana (Mouse-ear cress), this protein is Ubiquitin carboxyl-terminal hydrolase 3.